Consider the following 211-residue polypeptide: ATP phosphoribosyltransferase (211 aa).

Belongs to the ATP phosphoribosyltransferase family. Short subfamily. As to quaternary structure, heteromultimer composed of HisG and HisZ subunits.

The protein localises to the cytoplasm. The catalysed reaction is 1-(5-phospho-beta-D-ribosyl)-ATP + diphosphate = 5-phospho-alpha-D-ribose 1-diphosphate + ATP. The protein operates within amino-acid biosynthesis; L-histidine biosynthesis; L-histidine from 5-phospho-alpha-D-ribose 1-diphosphate: step 1/9. Its function is as follows. Catalyzes the condensation of ATP and 5-phosphoribose 1-diphosphate to form N'-(5'-phosphoribosyl)-ATP (PR-ATP). Has a crucial role in the pathway because the rate of histidine biosynthesis seems to be controlled primarily by regulation of HisG enzymatic activity. The sequence is that of ATP phosphoribosyltransferase from Bacillus cereus (strain 03BB102).